The sequence spans 141 residues: Nucleoside diphosphate kinase (141 aa).

Lys11, Phe59, Arg87, Thr93, Arg104, and Asn114 together coordinate ATP. His117 (pros-phosphohistidine intermediate) is an active-site residue.

The protein belongs to the NDK family. Homotetramer. Requires Mg(2+) as cofactor.

The protein resides in the cytoplasm. The catalysed reaction is a 2'-deoxyribonucleoside 5'-diphosphate + ATP = a 2'-deoxyribonucleoside 5'-triphosphate + ADP. It catalyses the reaction a ribonucleoside 5'-diphosphate + ATP = a ribonucleoside 5'-triphosphate + ADP. Major role in the synthesis of nucleoside triphosphates other than ATP. The ATP gamma phosphate is transferred to the NDP beta phosphate via a ping-pong mechanism, using a phosphorylated active-site intermediate. In Vibrio campbellii (strain ATCC BAA-1116), this protein is Nucleoside diphosphate kinase.